The chain runs to 281 residues: CLA biosynthesis isomerase (281 aa).

The protein belongs to the ADC family.

The protein localises to the cytoplasm. It carries out the reaction 10-oxo-(12Z)-octadecenoate = 10-oxo-(11E)-octadecenoate. It functions in the pathway lipid metabolism; fatty acid metabolism. Is involved in a saturation metabolic pathway of polyunsaturated fatty acids, that detoxifies unsaturated fatty acids and generates hydroxy fatty acids, oxo fatty acids, conjugated fatty acids such as conjugated linoleic acids (CLAs), and partially saturated trans-fatty acids as intermediates. CLA-DC catalyzes the migration of the carbon-carbon double bond in 10-oxo-(12Z)-octadecenoate to produce 10-oxo-(11E)-octadecenoate, during linoleate metabolism. As part of the gut microbiome, this enzyme modifies host fatty acid composition and is expected to improve human health by altering lipid metabolism related to the onset of metabolic syndrome. The chain is CLA biosynthesis isomerase from Lactiplantibacillus plantarum (Lactobacillus plantarum).